Consider the following 859-residue polypeptide: DNA mismatch repair protein MutS (859 aa).

ATP is bound at residue 615–622 (GPNMGGKS).

Belongs to the DNA mismatch repair MutS family.

Functionally, this protein is involved in the repair of mismatches in DNA. It is possible that it carries out the mismatch recognition step. This protein has a weak ATPase activity. The sequence is that of DNA mismatch repair protein MutS from Chromohalobacter salexigens (strain ATCC BAA-138 / DSM 3043 / CIP 106854 / NCIMB 13768 / 1H11).